Consider the following 211-residue polypeptide: Large ribosomal subunit protein uL4 (211 aa).

The segment at 40–85 (QQAHSRQGTASTLTRSEVRGGGRKPYKQKGTGRARQGSVRTPLRPG) is disordered. Residues 41–54 (QAHSRQGTASTLTR) are compositionally biased toward polar residues. Residues 60 to 71 (GGRKPYKQKGTG) show a composition bias toward basic residues.

This sequence belongs to the universal ribosomal protein uL4 family. As to quaternary structure, part of the 50S ribosomal subunit.

In terms of biological role, one of the primary rRNA binding proteins, this protein initially binds near the 5'-end of the 23S rRNA. It is important during the early stages of 50S assembly. It makes multiple contacts with different domains of the 23S rRNA in the assembled 50S subunit and ribosome. Functionally, forms part of the polypeptide exit tunnel. This chain is Large ribosomal subunit protein uL4, found in Synechococcus sp. (strain CC9311).